We begin with the raw amino-acid sequence, 932 residues long: GPI ethanolamine phosphate transferase 1 (932 aa).

Topologically, residues 1–8 (MISLNKKL) are cytoplasmic. Residues 9–29 (VLLVGVIFHVAFMWSIFDIYF) form a helical membrane-spanning segment. The Lumenal segment spans residues 30 to 456 (VSPLIHGMKH…TYNWLFLRTL (427 aa)). N-linked (GlcNAc...) asparagine glycosylation is found at Asn-138, Asn-202, and Asn-360. Residues 457 to 477 (VTIGFFGWIAVAFCSYLLAFV) form a helical membrane-spanning segment. Residues 478–486 (VQSDKPFTT) lie on the Cytoplasmic side of the membrane. The chain crosses the membrane as a helical span at residues 487–507 (SLPLKGVAYVALAILSGFFVF). Residues 508-509 (QK) are Lumenal-facing. Residues 510 to 530 (SPLHYHLYAVFPVVFWEAVLQ) traverse the membrane as a helical segment. The Cytoplasmic segment spans residues 531–551 (RRTAVAEGISILARRSTSKAP). A helical membrane pass occupies residues 552–572 (ALAAILDIGLSLVLLEAIVYG). Residues 573 to 577 (YFHRE) lie on the Lumenal side of the membrane. The chain crosses the membrane as a helical span at residues 578–598 (IFSVCFGLATLWPFVHNFTVA). Over 599 to 603 (KREWP) the chain is Cytoplasmic. The chain crosses the membrane as a helical span at residues 604–624 (TTLAWVVMCAIMSSFTLLEVV). Topologically, residues 625 to 627 (KVE) are lumenal. Residues 628-648 (SIEQILLSGALMLVIGLVFTI) traverse the membrane as a helical segment. Topologically, residues 649–653 (HLQRK) are cytoplasmic. The chain crosses the membrane as a helical span at residues 654-674 (LALAASTVCVLFAQILLVVAT). Residues 675 to 696 (MYFTRESVESLTARNGLPLFSQ) are Lumenal-facing. A helical membrane pass occupies residues 697 to 717 (VGGWISLLLSLAVPFLHFLGS). Residues 718-737 (DAKDYRLRLLIIFLAFGPTF) are Cytoplasmic-facing. Residues 738–758 (VILTISWEGFFYVCFFAILVI) traverse the membrane as a helical segment. The Lumenal portion of the chain corresponds to 759-786 (WIELETQMRDARVTPQTRADLTPGDFRM). A helical transmembrane segment spans residues 787-807 (ALFTFFMSQIGFFGIGNIASI). At 808–828 (SSFSLDSVYRLIPVFDPFSMG) the chain is on the cytoplasmic side. A helical transmembrane segment spans residues 829-849 (ALLMFKILVPFAVLSACLGIL). Residues 850–859 (NLKLGVPPSA) lie on the Lumenal side of the membrane. The chain crosses the membrane as a helical span at residues 860 to 880 (LFSMVLCVSDILTLNFFYLVV). Residues 881–900 (DEGSWLDIGTGISHYCIASG) are Cytoplasmic-facing. A helical membrane pass occupies residues 901-921 (LSLFMMVLEYLSGVLVAGVTI). Residues 922-932 (APHVSKIKKDM) lie on the Lumenal side of the membrane.

Belongs to the PIGG/PIGN/PIGO family. PIGN subfamily.

The protein localises to the endoplasmic reticulum membrane. The protein operates within glycolipid biosynthesis; glycosylphosphatidylinositol-anchor biosynthesis. In terms of biological role, ethanolamine phosphate transferase involved in glycosylphosphatidylinositol-anchor biosynthesis. Transfers ethanolamine phosphate to the first alpha-1,4-linked mannose of the glycosylphosphatidylinositol precursor of GPI-anchor. This is GPI ethanolamine phosphate transferase 1 (MCD4) from Yarrowia lipolytica (strain CLIB 122 / E 150) (Yeast).